We begin with the raw amino-acid sequence, 183 residues long: Translation initiation factor IF-3 (183 aa).

Residues 1–13 show a composition bias toward polar residues; the sequence is MKQPDRNQQQGAK. The disordered stretch occupies residues 1-21; the sequence is MKQPDRNQQQGAKSNRPAIND.

This sequence belongs to the IF-3 family. In terms of assembly, monomer.

It localises to the cytoplasm. Functionally, IF-3 binds to the 30S ribosomal subunit and shifts the equilibrium between 70S ribosomes and their 50S and 30S subunits in favor of the free subunits, thus enhancing the availability of 30S subunits on which protein synthesis initiation begins. The chain is Translation initiation factor IF-3 from Acinetobacter baumannii (strain AYE).